Reading from the N-terminus, the 242-residue chain is Probable transcriptional regulatory protein XCC3027 (242 aa).

This sequence belongs to the TACO1 family.

It is found in the cytoplasm. This chain is Probable transcriptional regulatory protein XCC3027, found in Xanthomonas campestris pv. campestris (strain ATCC 33913 / DSM 3586 / NCPPB 528 / LMG 568 / P 25).